Here is a 447-residue protein sequence, read N- to C-terminus: Phosphoglucosamine mutase (447 aa).

S100 functions as the Phosphoserine intermediate in the catalytic mechanism. Mg(2+) is bound by residues S100, D239, D241, and D243. S100 is subject to Phosphoserine.

Belongs to the phosphohexose mutase family. Requires Mg(2+) as cofactor. Post-translationally, activated by phosphorylation.

The catalysed reaction is alpha-D-glucosamine 1-phosphate = D-glucosamine 6-phosphate. Catalyzes the conversion of glucosamine-6-phosphate to glucosamine-1-phosphate. In Dictyoglomus turgidum (strain DSM 6724 / Z-1310), this protein is Phosphoglucosamine mutase.